The chain runs to 319 residues: Lipoyl synthase (319 aa).

Residues 6–29 are disordered; sequence DTVSANPVRPRHPEKAARPDALSP. Residues 16 to 29 are compositionally biased toward basic and acidic residues; sequence RHPEKAARPDALSP. [4Fe-4S] cluster is bound by residues cysteine 61, cysteine 66, cysteine 72, cysteine 87, cysteine 91, cysteine 94, and serine 300. Residues 73–289 enclose the Radical SAM core domain; the sequence is WDKKHATFMI…QTTAYAKGFL (217 aa).

The protein belongs to the radical SAM superfamily. Lipoyl synthase family. It depends on [4Fe-4S] cluster as a cofactor.

It localises to the cytoplasm. It carries out the reaction [[Fe-S] cluster scaffold protein carrying a second [4Fe-4S](2+) cluster] + N(6)-octanoyl-L-lysyl-[protein] + 2 oxidized [2Fe-2S]-[ferredoxin] + 2 S-adenosyl-L-methionine + 4 H(+) = [[Fe-S] cluster scaffold protein] + N(6)-[(R)-dihydrolipoyl]-L-lysyl-[protein] + 4 Fe(3+) + 2 hydrogen sulfide + 2 5'-deoxyadenosine + 2 L-methionine + 2 reduced [2Fe-2S]-[ferredoxin]. It functions in the pathway protein modification; protein lipoylation via endogenous pathway; protein N(6)-(lipoyl)lysine from octanoyl-[acyl-carrier-protein]: step 2/2. Functionally, catalyzes the radical-mediated insertion of two sulfur atoms into the C-6 and C-8 positions of the octanoyl moiety bound to the lipoyl domains of lipoate-dependent enzymes, thereby converting the octanoylated domains into lipoylated derivatives. This is Lipoyl synthase from Rhodopseudomonas palustris (strain ATCC BAA-98 / CGA009).